We begin with the raw amino-acid sequence, 273 residues long: DnaJ homolog subfamily C member 27 (273 aa).

The segment at 1-18 is required for interaction with MAPK1; it reads METNVPKRKEPAKSLRIK. GTP contacts are provided by residues 23–30, 71–75, and 134–137; these read GNAEVGKS, DMAGH, and NKID. In terms of domain architecture, J spans 217 to 273; sequence DSWEMLGVRPGASREEVNKAYRKLAVLLHPDKCVAPGSEDAFKAVVNARTALLKNIK.

Belongs to the small GTPase superfamily. Rab family. In terms of assembly, interacts directly with MAPK1 (wild-type and kinase-deficient forms). Interacts directly (in GTP-bound form) with MAP2K1 (wild-type and kinase-deficient forms).

The protein localises to the nucleus. Its function is as follows. GTPase which can activate the MEK/ERK pathway and induce cell transformation when overexpressed. May act as a nuclear scaffold for MAPK1, probably by association with MAPK1 nuclear export signal leading to enhanced ERK1/ERK2 signaling. This chain is DnaJ homolog subfamily C member 27 (Dnajc27), found in Mus musculus (Mouse).